A 107-amino-acid chain; its full sequence is Class I hydrophobin 3 (107 aa).

A signal peptide spans 1 to 18; sequence MQFKVLAALVIGATLAAA. 4 disulfide bridges follow: Cys26–Cys86, Cys33–Cys80, Cys34–Cys67, and Cys87–Cys100. N-linked (GlcNAc...) asparagine glycosylation is found at Asn35 and Asn89.

Belongs to the fungal hydrophobin family. Self-assembles to form functional amyloid fibrils called rodlets. Self-assembly into fibrillar rodlets occurs spontaneously at hydrophobic:hydrophilic interfaces and the rodlets further associate laterally to form amphipathic monolayers.

It is found in the secreted. The protein localises to the cell wall. Its function is as follows. Aerial growth, conidiation, and dispersal of filamentous fungi in the environment rely upon a capability of their secreting small amphipathic proteins called hydrophobins (HPBs) with low sequence identity. Class I can self-assemble into an outermost layer of rodlet bundles on aerial cell surfaces, conferring cellular hydrophobicity that supports fungal growth, development and dispersal; whereas Class II form highly ordered films at water-air interfaces through intermolecular interactions but contribute nothing to the rodlet structure. Pnh3 is a class I hydrophobin that might be involved in the attachment of the hydrophilic wall of hyphae to the hydrophobic surface of wood under inorganic phosphate (Pi)-deficient conditions and enable the mycelium to degrade efficiently the components of wood and to acquire nutrients containing Pi. This chain is Class I hydrophobin 3, found in Pholiota nameko.